The sequence spans 372 residues: Rab9 effector protein with kelch motifs (372 aa).

Kelch repeat units follow at residues 49 to 95, 100 to 146, 151 to 203, 204 to 250, and 254 to 303; these read KVFI…FIPS, SIWV…TSSA, QLYV…AAGT, KLFI…SAVA, and HLYV…IIPW. A disordered region spans residues 309–341; that stretch reads SEKEDSNSATVNRDAEKGDSTEKGVTQGGDSQE. Over residues 321–330 the composition is skewed to basic and acidic residues; that stretch reads RDAEKGDSTE. The Kelch 6 repeat unit spans residues 349 to 372; that stretch reads LCFVFGGMNTEGEIYDDCIVTAVD.

In terms of assembly, interacts with PIKFYVE; the interaction recruits RABEPK to the endosomal membrane. Interacts with RAB9 in its GTP-bound conformation. Phosphorylated on Ser residues by PIKFYVE.

The protein resides in the cytoplasm. It localises to the endosome membrane. Rab9 effector required for endosome to trans-Golgi network (TGN) transport. This is Rab9 effector protein with kelch motifs (RABEPK) from Bos taurus (Bovine).